The chain runs to 216 residues: Neurotrophic factor BDNF precursor form (216 aa).

The propeptide occupies 1-108 (PMKEVSIRGQ…AANMSMRVRR (108 aa)). The N-linked (GlcNAc...) asparagine glycan is linked to Asn101. A disulfide bridge links Cys121 with Cys188.

It belongs to the NGF-beta family.

Its subcellular location is the secreted. Its function is as follows. Promotes the survival of neuronal populations that are all located either in the central nervous system or directly connected to it. This Cylindrophis ruffus (Red-tailed pipe snake) protein is Neurotrophic factor BDNF precursor form (BDNF).